The following is a 383-amino-acid chain: Chaperone protein DnaJ (383 aa).

Positions 5 to 70 (DYYELLGVEK…QKRAAYDRFG (66 aa)) constitute a J domain. The CR-type zinc finger occupies 137-215 (GKTATVKVPS…CGGSGRTRKE (79 aa)). Positions 150, 153, 167, 170, 189, 192, 203, and 206 each coordinate Zn(2+). 4 CXXCXGXG motif repeats span residues 150–157 (CEDCKGTG), 167–174 (CSACHGHG), 189–196 (CPTCQGMG), and 203–210 (CRSCGGSG).

The protein belongs to the DnaJ family. Homodimer. Zn(2+) is required as a cofactor.

The protein localises to the cytoplasm. Functionally, participates actively in the response to hyperosmotic and heat shock by preventing the aggregation of stress-denatured proteins and by disaggregating proteins, also in an autonomous, DnaK-independent fashion. Unfolded proteins bind initially to DnaJ; upon interaction with the DnaJ-bound protein, DnaK hydrolyzes its bound ATP, resulting in the formation of a stable complex. GrpE releases ADP from DnaK; ATP binding to DnaK triggers the release of the substrate protein, thus completing the reaction cycle. Several rounds of ATP-dependent interactions between DnaJ, DnaK and GrpE are required for fully efficient folding. Also involved, together with DnaK and GrpE, in the DNA replication of plasmids through activation of initiation proteins. The chain is Chaperone protein DnaJ from Paramagnetospirillum magneticum (strain ATCC 700264 / AMB-1) (Magnetospirillum magneticum).